The chain runs to 563 residues: IQCJ-SCHIP1 readthrough transcript protein (563 aa).

The IQ domain maps to 47–67 (ESKVKIIQRAWREYLQRQEPL). 4 disordered regions span residues 63 to 150 (RQEP…VSAL), 164 to 295 (VIDE…EPPV), 312 to 336 (FREQEVRNQGQARTNSTSAQKNERE), and 384 to 430 (SGSD…SLDD). Over residues 76–87 (SVSSEKLSSSVS) the composition is skewed to low complexity. Polar residues predominate over residues 88–97 (MNTFSDSSTP). Residues 108–143 (SDAGSSSSSSRASSQSNSTKVTPCSECKSSSSPGGS) are compositionally biased toward low complexity. Residues 168 to 182 (WAPEEDGEEEEEEDE) show a composition bias toward acidic residues. Composition is skewed to basic and acidic residues over residues 183–199 (RDQRGYRDDRSPAREPG) and 229–238 (HQHDPQDLRH). Ser193 carries the phosphoserine modification. The segment covering 318 to 331 (RNQGQARTNSTSAQ) has biased composition (polar residues). Residues 385 to 399 (GSDKDSDADDSKTET) show a composition bias toward basic and acidic residues. The segment covering 400–411 (SLDTPLSPMSKQ) has biased composition (polar residues). Positions 419 to 563 (DTTEEESESL…KHMAEKMPAK (145 aa)) are required for interaction with ankyrins. Residues 420-430 (TTEEESESLDD) show a composition bias toward acidic residues. Residues 500 to 534 (IGQLQVIVNDLHSQIESLNEELVQLLLIRDELHTE) are a coiled coil.

Homooligomer (via coiled coil domain). Interacts (via IQ domain) with calmodulin; the interaction is direct and lost in presence of calcium. Interacts with ANK3 (via ANK repeats); required for localization at axon initial segments (AIS) and nodes of Ranvier. Interacts with SPTBN4. Interacts with KCNQ2 and KCNQ3. Highly expressed in brain and to a lower extent in heart and kidney.

The protein resides in the cell projection. The protein localises to the axon. It localises to the cytoplasm. In terms of biological role, may play a role in action potential conduction in myelinated cells through the organization of molecular complexes at nodes of Ranvier and axon initial segments. May also play a role in axon outgrowth and guidance. The polypeptide is IQCJ-SCHIP1 readthrough transcript protein (Homo sapiens (Human)).